The following is a 246-amino-acid chain: NH(3)-dependent NAD(+) synthetase (246 aa).

An ATP-binding site is contributed by 29–36 (GLSGGIDS). Asp35 is a binding site for Mg(2+). Arg110 provides a ligand contact to deamido-NAD(+). Thr130 contacts ATP. Glu135 provides a ligand contact to Mg(2+). 2 residues coordinate ATP: Lys159 and Ser181.

The protein belongs to the NAD synthetase family. In terms of assembly, homodimer.

The catalysed reaction is deamido-NAD(+) + NH4(+) + ATP = AMP + diphosphate + NAD(+) + H(+). It participates in cofactor biosynthesis; NAD(+) biosynthesis; NAD(+) from deamido-NAD(+) (ammonia route): step 1/1. Functionally, catalyzes the ATP-dependent amidation of deamido-NAD to form NAD. Uses ammonia as a nitrogen source. This Campylobacter jejuni subsp. doylei (strain ATCC BAA-1458 / RM4099 / 269.97) protein is NH(3)-dependent NAD(+) synthetase.